The primary structure comprises 480 residues: Histone deacetylase 1 (480 aa).

Residues 9 to 321 are histone deacetylase; the sequence is RKVCYYYDGD…WTYETAVALD (313 aa). 1D-myo-inositol 1,4,5,6-tetrakisphosphate-binding residues include G27 and K31. H141 is a catalytic residue. Zn(2+) contacts are provided by D176, H178, and D264. R270 lines the 1D-myo-inositol 1,4,5,6-tetrakisphosphate pocket. The segment at 376 to 480 is disordered; that stretch reads APGVQMQPIP…KGVKEETKST (105 aa). Residues 388–400 show a composition bias toward acidic residues; the sequence is AVQEDSGDEEEED. Positions 401–416 are enriched in basic and acidic residues; that stretch reads PEKRISIRNSDKRISC. Residues 417-427 are compositionally biased toward acidic residues; sequence DEEFSDSEDEG. Residues 455-480 are compositionally biased toward basic and acidic residues; that stretch reads KDEKEEEKAKEEKAEPKGVKEETKST.

Belongs to the histone deacetylase family. HD type 1 subfamily. Zn(2+) is required as a cofactor.

Its subcellular location is the nucleus. It carries out the reaction N(6)-acetyl-L-lysyl-[histone] + H2O = L-lysyl-[histone] + acetate. The enzyme catalyses N(6)-acetyl-L-lysyl-[protein] + H2O = L-lysyl-[protein] + acetate. It catalyses the reaction N(6)-(2E)-butenoyl-L-lysyl-[protein] + H2O = (2E)-2-butenoate + L-lysyl-[protein]. The catalysed reaction is N(6)-[(S)-lactoyl]-L-lysyl-[protein] + H2O = (S)-lactate + L-lysyl-[protein]. With respect to regulation, inositol tetraphosphate (1D-myo-inositol 1,4,5,6-tetrakisphosphate) may act as an intermolecular glue between HDAC1 and N-Cor repressor complex components. Its function is as follows. Histone deacetylase that catalyzes the deacetylation of lysine residues on the N-terminal part of the core histones (H2A, H2B, H3 and H4). Histone deacetylation gives a tag for epigenetic repression and plays an important role in transcriptional regulation, cell cycle progression and developmental events. Histone deacetylases act via the formation of large multiprotein complexes. Also functions as a deacetylase for non-histone proteins. In addition to protein deacetylase activity, also has protein-lysine deacylase activity: acts as a protein decrotonylase and delactylase by mediating decrotonylation ((2E)-butenoyl) and delactylation (lactoyl) of histones, respectively. The sequence is that of Histone deacetylase 1 (HDAC1) from Gallus gallus (Chicken).